A 321-amino-acid chain; its full sequence is Peroxidase 42 (321 aa).

Positions 1-29 (MATSSGSCLIISLLVVVVAAALSASTASA) are cleaved as a signal peptide. Q30 carries the pyrrolidone carboxylic acid modification. 4 cysteine pairs are disulfide-bonded: C40/C118, C73/C78, C124/C315, and C202/C227. H71 (proton acceptor) is an active-site residue. 5 residues coordinate Ca(2+): D72, I75, G77, D79, and S81. N-linked (GlcNAc...) asparagine glycosylation is found at N85 and N96. Substrate is bound at residue P165. H195 is a heme b binding site. A Ca(2+)-binding site is contributed by T196. N211 carries an N-linked (GlcNAc...) asparagine glycan. Residues D239, T242, and G247 each coordinate Ca(2+). N270 carries N-linked (GlcNAc...) asparagine glycosylation.

Belongs to the peroxidase family. Classical plant (class III) peroxidase subfamily. Requires heme b as cofactor. The cofactor is Ca(2+).

It is found in the secreted. It carries out the reaction 2 a phenolic donor + H2O2 = 2 a phenolic radical donor + 2 H2O. Its function is as follows. Removal of H(2)O(2), oxidation of toxic reductants, biosynthesis and degradation of lignin, suberization, auxin catabolism, response to environmental stresses such as wounding, pathogen attack and oxidative stress. These functions might be dependent on each isozyme/isoform in each plant tissue. In Zea mays (Maize), this protein is Peroxidase 42 (PER42).